The following is a 483-amino-acid chain: UDP-N-acetylmuramoyl-L-alanyl-D-glutamate--2,6-diaminopimelate ligase (483 aa).

Ser-29 provides a ligand contact to UDP-N-acetyl-alpha-D-muramoyl-L-alanyl-D-glutamate. 112–118 contacts ATP; it reads GTNGKTT. UDP-N-acetyl-alpha-D-muramoyl-L-alanyl-D-glutamate-binding positions include 154 to 155, Ser-181, and Arg-189; that span reads TT. Lys-221 bears the N6-carboxylysine mark. Meso-2,6-diaminopimelate is bound by residues Arg-380, 404-407, Gly-454, and Glu-458; that span reads DNPR. A Meso-diaminopimelate recognition motif motif is present at residues 404–407; it reads DNPR.

It belongs to the MurCDEF family. MurE subfamily. Mg(2+) serves as cofactor. In terms of processing, carboxylation is probably crucial for Mg(2+) binding and, consequently, for the gamma-phosphate positioning of ATP.

It localises to the cytoplasm. The catalysed reaction is UDP-N-acetyl-alpha-D-muramoyl-L-alanyl-D-glutamate + meso-2,6-diaminopimelate + ATP = UDP-N-acetyl-alpha-D-muramoyl-L-alanyl-gamma-D-glutamyl-meso-2,6-diaminopimelate + ADP + phosphate + H(+). It functions in the pathway cell wall biogenesis; peptidoglycan biosynthesis. Catalyzes the addition of meso-diaminopimelic acid to the nucleotide precursor UDP-N-acetylmuramoyl-L-alanyl-D-glutamate (UMAG) in the biosynthesis of bacterial cell-wall peptidoglycan. In Clostridium botulinum (strain ATCC 19397 / Type A), this protein is UDP-N-acetylmuramoyl-L-alanyl-D-glutamate--2,6-diaminopimelate ligase.